The following is a 27-amino-acid chain: MLVFQMRNVDKTSTVLKQTKNSDYADK.

In terms of biological role, this peptide is involved in the control mechanism of the synthesis of the erythromycin resistance protein. The chain is 23S rRNA methylase leader peptide (ermC) from Enterococcus faecalis (Streptococcus faecalis).